Reading from the N-terminus, the 712-residue chain is Polyribonucleotide nucleotidyltransferase (712 aa).

Mg(2+)-binding residues include Asp487 and Asp493. Residues Pro554 to Ile613 enclose the KH domain. The S1 motif domain occupies Gly623–Lys691.

It belongs to the polyribonucleotide nucleotidyltransferase family. The cofactor is Mg(2+).

It is found in the cytoplasm. The enzyme catalyses RNA(n+1) + phosphate = RNA(n) + a ribonucleoside 5'-diphosphate. Involved in mRNA degradation. Catalyzes the phosphorolysis of single-stranded polyribonucleotides processively in the 3'- to 5'-direction. The sequence is that of Polyribonucleotide nucleotidyltransferase from Rhizobium etli (strain ATCC 51251 / DSM 11541 / JCM 21823 / NBRC 15573 / CFN 42).